Here is a 96-residue protein sequence, read N- to C-terminus: UPF0235 protein VV2877 (96 aa).

It belongs to the UPF0235 family.

This is UPF0235 protein VV2877 from Vibrio vulnificus (strain YJ016).